Consider the following 465-residue polypeptide: Adenosylhomocysteinase (465 aa).

Residues T56, D131, and E191 each coordinate substrate. An NAD(+)-binding site is contributed by 192 to 194; that stretch reads TTT. Substrate is bound by residues K221 and D225. Residues N226, 255–260, E278, N313, 334–336, and N379 each bind NAD(+); these read GYGDVG and IGH.

It belongs to the adenosylhomocysteinase family. The cofactor is NAD(+).

The protein localises to the cytoplasm. The catalysed reaction is S-adenosyl-L-homocysteine + H2O = L-homocysteine + adenosine. The protein operates within amino-acid biosynthesis; L-homocysteine biosynthesis; L-homocysteine from S-adenosyl-L-homocysteine: step 1/1. In terms of biological role, may play a key role in the regulation of the intracellular concentration of adenosylhomocysteine. In Bartonella henselae (strain ATCC 49882 / DSM 28221 / CCUG 30454 / Houston 1) (Rochalimaea henselae), this protein is Adenosylhomocysteinase.